A 124-amino-acid chain; its full sequence is Small ribosomal subunit protein bS6 (124 aa).

Belongs to the bacterial ribosomal protein bS6 family.

Its function is as follows. Binds together with bS18 to 16S ribosomal RNA. The protein is Small ribosomal subunit protein bS6 of Haemophilus ducreyi (strain 35000HP / ATCC 700724).